A 79-amino-acid polypeptide reads, in one-letter code: Acyl carrier protein (79 aa).

In terms of domain architecture, Carrier spans 2–77 (SDTAERVKKI…DAIDFINQKT (76 aa)). Serine 37 carries the O-(pantetheine 4'-phosphoryl)serine modification.

It belongs to the acyl carrier protein (ACP) family. Post-translationally, 4'-phosphopantetheine is transferred from CoA to a specific serine of apo-ACP by AcpS. This modification is essential for activity because fatty acids are bound in thioester linkage to the sulfhydryl of the prosthetic group.

The protein resides in the cytoplasm. It participates in lipid metabolism; fatty acid biosynthesis. Carrier of the growing fatty acid chain in fatty acid biosynthesis. This Rhodospirillum centenum (strain ATCC 51521 / SW) protein is Acyl carrier protein.